We begin with the raw amino-acid sequence, 457 residues long: MFTQAVIALIGLVSIRTGKTEDVTPCTTNCGCWARLEKQITVYRGDYSAAEENLKENKKNFGKIIAATVLGSEKLKATVAPVLLSAAQIIHECEEALTTARPAILDAEKKVAELRALYDVQQKLKEGNGELQLHIQDDTNINTAKEVPKANLGNINKKGCADDLNTPDAATIDKTNIETEGPTPKVITHVHVEARCQRDGTPTNGCHDGQLGQNGKLEFSLTYDSKDTNDLATWLADTATKKQISATEVDFIGNLNTEANTAIKGLKSSNPAPACSKKIRDYKTIADNSKFNLMVTKALIGKTDAEAGQESKEPELAAAITKYYGTEGTKFEDQLWKAIERTPAYLGDQKKEQTTKIEKLETLTEVGEATARGLVKQLAAGAQARQTASGDDQSAENQCGGKKEDECKDGCELVEGVCKPVKQGEGENKEKTGTTNTTGSNSFVIKKAPLWLAFLLF.

The signal sequence occupies residues 1 to 20; it reads MFTQAVIALIGLVSIRTGKT. Polar residues predominate over residues 385–397; it reads RQTASGDDQSAEN. Positions 385–406 are disordered; that stretch reads RQTASGDDQSAENQCGGKKEDE. A glycan (N-linked (GlcNAc...) asparagine) is linked at Asn-436. A lipid anchor (GPI-anchor amidated serine) is attached at Ser-440. The propeptide at 441-457 is removed in mature form; that stretch reads NSFVIKKAPLWLAFLLF.

Its subcellular location is the cell membrane. Its function is as follows. VSG forms a coat on the surface of the parasite. The trypanosome evades the immune response of the host by expressing a series of antigenically distinct VSGs from an estimated 1000 VSG genes. This is Variant surface glycoprotein 20 from Trypanosoma equiperdum.